The chain runs to 382 residues: Deoxyhypusine synthase (382 aa).

Residues 108-112, 134-136, glutamate 140, and aspartate 257 each bind NAD(+); these read SNLIS and TAG. Position 139–140 (139–140) interacts with spermidine; the sequence is EE. Aspartate 262 is a binding site for spermidine. Glycine 304 contributes to the NAD(+) binding site. Spermidine is bound at residue histidine 309. Residue 329-330 participates in NAD(+) binding; it reads TG. Residues 335–337 and 344–350 each bind spermidine; these read GSD and EAVSWGK. Lysine 350 acts as the Nucleophile in catalysis. 363-364 lines the NAD(+) pocket; it reads DV.

This sequence belongs to the deoxyhypusine synthase family. Requires NAD(+) as cofactor.

The catalysed reaction is [eIF5A protein]-L-lysine + spermidine = [eIF5A protein]-deoxyhypusine + propane-1,3-diamine. It participates in protein modification; eIF5A hypusination. Its function is as follows. Catalyzes the NAD-dependent oxidative cleavage of spermidine and the subsequent transfer of the butylamine moiety of spermidine to the epsilon-amino group of a specific lysine residue of the eIF-5A precursor protein to form the intermediate deoxyhypusine residue. This is Deoxyhypusine synthase (DYS1) from Eremothecium gossypii (strain ATCC 10895 / CBS 109.51 / FGSC 9923 / NRRL Y-1056) (Yeast).